The following is a 209-amino-acid chain: Ribonuclease HII (209 aa).

Positions 19–209 constitute an RNase H type-2 domain; that stretch reads CTIVGVDEVG…ASGITKLYNK (191 aa). Asp-25, Glu-26, and Asp-118 together coordinate a divalent metal cation.

Belongs to the RNase HII family. Mn(2+) serves as cofactor. It depends on Mg(2+) as a cofactor.

It localises to the cytoplasm. It carries out the reaction Endonucleolytic cleavage to 5'-phosphomonoester.. Its function is as follows. Endonuclease that specifically degrades the RNA of RNA-DNA hybrids. This is Ribonuclease HII from Ehrlichia chaffeensis (strain ATCC CRL-10679 / Arkansas).